The chain runs to 81 residues: MAHSVKIYDTCIGCTQCVRACPTDVLEMIPWDGCKASQIASAPRTEDCVGCKRCESACPTDFLSVRVYLGSETTRSMGLAY.

4Fe-4S ferredoxin-type domains lie at 2–31 (AHSV…MIPW) and 39–68 (IASA…VRVY). Residues Cys-11, Cys-14, Cys-17, Cys-21, Cys-48, Cys-51, Cys-54, and Cys-58 each contribute to the [4Fe-4S] cluster site.

The eukaryotic PSI reaction center is composed of at least 11 subunits. The cofactor is [4Fe-4S] cluster.

The protein localises to the plastid. It localises to the chloroplast thylakoid membrane. The enzyme catalyses reduced [plastocyanin] + hnu + oxidized [2Fe-2S]-[ferredoxin] = oxidized [plastocyanin] + reduced [2Fe-2S]-[ferredoxin]. Functionally, apoprotein for the two 4Fe-4S centers FA and FB of photosystem I (PSI); essential for photochemical activity. FB is the terminal electron acceptor of PSI, donating electrons to ferredoxin. The C-terminus interacts with PsaA/B/D and helps assemble the protein into the PSI complex. Required for binding of PsaD and PsaE to PSI. PSI is a plastocyanin-ferredoxin oxidoreductase, converting photonic excitation into a charge separation, which transfers an electron from the donor P700 chlorophyll pair to the spectroscopically characterized acceptors A0, A1, FX, FA and FB in turn. This is Photosystem I iron-sulfur center from Staurastrum punctulatum (Green alga).